The primary structure comprises 448 residues: Glutamyl-tRNA reductase (448 aa).

Substrate-binding positions include T49–R52, S109, E114–Q116, and Q120. The active-site Nucleophile is C50. G189 to S194 lines the NADP(+) pocket.

The protein belongs to the glutamyl-tRNA reductase family. Homodimer.

The enzyme catalyses (S)-4-amino-5-oxopentanoate + tRNA(Glu) + NADP(+) = L-glutamyl-tRNA(Glu) + NADPH + H(+). It participates in porphyrin-containing compound metabolism; protoporphyrin-IX biosynthesis; 5-aminolevulinate from L-glutamyl-tRNA(Glu): step 1/2. Catalyzes the NADPH-dependent reduction of glutamyl-tRNA(Glu) to glutamate 1-semialdehyde (GSA). This is Glutamyl-tRNA reductase from Staphylococcus haemolyticus (strain JCSC1435).